The following is a 427-amino-acid chain: 3-phosphoshikimate 1-carboxyvinyltransferase (427 aa).

3-phosphoshikimate is bound by residues lysine 22, serine 23, and arginine 27. Lysine 22 is a binding site for phosphoenolpyruvate. 2 residues coordinate phosphoenolpyruvate: glycine 96 and arginine 124. Residues serine 169, serine 170, glutamine 171, serine 197, aspartate 313, asparagine 336, and lysine 340 each coordinate 3-phosphoshikimate. A phosphoenolpyruvate-binding site is contributed by glutamine 171. The active-site Proton acceptor is aspartate 313. Residues arginine 344, arginine 386, and lysine 411 each coordinate phosphoenolpyruvate.

The protein belongs to the EPSP synthase family. In terms of assembly, monomer.

The protein resides in the cytoplasm. The catalysed reaction is 3-phosphoshikimate + phosphoenolpyruvate = 5-O-(1-carboxyvinyl)-3-phosphoshikimate + phosphate. Its pathway is metabolic intermediate biosynthesis; chorismate biosynthesis; chorismate from D-erythrose 4-phosphate and phosphoenolpyruvate: step 6/7. Its function is as follows. Catalyzes the transfer of the enolpyruvyl moiety of phosphoenolpyruvate (PEP) to the 5-hydroxyl of shikimate-3-phosphate (S3P) to produce enolpyruvyl shikimate-3-phosphate and inorganic phosphate. This is 3-phosphoshikimate 1-carboxyvinyltransferase from Escherichia coli O127:H6 (strain E2348/69 / EPEC).